Reading from the N-terminus, the 445-residue chain is MNLASQSGEAGAGQLLFANFNQDNTSLAVGSKSGYKFFSLSSVDKLEQIYECTDTEDVCIVERLFSSSLVAIVSLKAPRKLKVCHFKKGTEICNYSYSNTILAVKLNRQRLIVCLEESLYIHNIRDMKVLHTIRETPPNPAGLCALSINNDNCYLAYPGSASIGEVQVFDTINLRAANMIPAHDSPLAALAFDASGTKLATASEKGTVIRVFSIPEGQKLFEFRRGVKRCVSICSLAFSMDGMFLSASSNTETVHIFKLEAVREKPPEEPTTWTGYFGKVLMASTSYLPSQVTEMFNQGRAFATVRLPFCGHKNICSLTTIQKIPRLLVGASDGYLYMYNLDPQEGGECALMRQHRLDGSMETTSEIVDSASHDCPLATQTYGTAAAKGAYVPSSPTRLGKGQDANLEAYTDDLGAVGGACLEDEASALRLDEDSEHPPMILRTD.

One copy of the WD 1 repeat lies at 182–222 (AHDSPLAALAFDASGTKLATASEKGTVIRVFSIPEGQKLFE). The L/FRRG motif motif lies at 223–226 (FRRG). WD repeat units lie at residues 228–267 (KRCV…EKPP) and 311–349 (GHKN…GGEC). Serine 395 is modified (phosphoserine).

Belongs to the WD repeat PROPPIN family. Interacts with TECPR1. Interacts with ATG16L1. Interacts with ATG5. Interacts with WIPI1. Interacts with WDR45. May interact with NUDC. Interacts with ULK1 and RB1CC1.

It is found in the preautophagosomal structure membrane. In terms of biological role, component of the autophagy machinery that controls the major intracellular degradation process by which cytoplasmic materials are packaged into autophagosomes and delivered to lysosomes for degradation. Involved in an early step of the formation of preautophagosomal structures. Binds and is activated by phosphatidylinositol 3-phosphate (PtdIns3P) forming on membranes of the endoplasmic reticulum upon activation of the upstream ULK1 and PI3 kinases. Mediates ER-isolation membranes contacts by interacting with the ULK1:RB1CC1 complex and PtdIns3P. Once activated, WIPI2 recruits at phagophore assembly sites the ATG12-ATG5-ATG16L1 complex that directly controls the elongation of the nascent autophagosomal membrane. This Mus musculus (Mouse) protein is WD repeat domain phosphoinositide-interacting protein 2.